The following is a 362-amino-acid chain: Homoisocitrate dehydrogenase (362 aa).

Position 79–81 (79–81) interacts with NADH; that stretch reads VQS. Serine 81 serves as a coordination point for (2R,3S)-homoisocitrate. Residues serine 81 and serine 91 each carry the phosphoserine modification. (2R,3S)-homoisocitrate is bound by residues arginine 97, arginine 107, arginine 126, tyrosine 133, lysine 196, and asparagine 198. Asparagine 198 lines the NADH pocket. Positions 232, 256, and 260 each coordinate Mg(2+). NADH is bound by residues 289 to 293 and asparagine 301; that span reads GSAPD.

Belongs to the isocitrate and isopropylmalate dehydrogenases family. Mg(2+) is required as a cofactor.

It localises to the cytoplasm. It catalyses the reaction (2R,3S)-homoisocitrate + NAD(+) = 2-oxoadipate + CO2 + NADH. It functions in the pathway amino-acid biosynthesis; L-lysine biosynthesis via AAA pathway; L-alpha-aminoadipate from 2-oxoglutarate: step 4/5. In Schizosaccharomyces pombe (strain 972 / ATCC 24843) (Fission yeast), this protein is Homoisocitrate dehydrogenase (lys12).